Here is a 338-residue protein sequence, read N- to C-terminus: uncharacterized protein (338 aa).

An N-terminal signal peptide occupies residues 1 to 29 (MIKQLCKNITICTLALSTTFTVLPATSFA).

Belongs to the aerolysin family.

This is an uncharacterized protein from Staphylococcus aureus (strain USA300).